A 344-amino-acid polypeptide reads, in one-letter code: Cytochrome c biogenesis protein CcsA (344 aa).

The next 8 helical transmembrane spans lie at 21-41 (NVAF…AAFP), 45-65 (LLSE…AALL), 80-100 (LYES…LALH), 106-126 (WVGV…ALAL), 151-171 (VMLL…AFLI), 252-272 (LIGL…VWAN), 287-307 (WALI…TKGW), and 313-333 (ALLA…VNFL).

The protein belongs to the CcmF/CycK/Ccl1/NrfE/CcsA family. In terms of assembly, may interact with ccs1.

The protein localises to the cellular thylakoid membrane. Functionally, required during biogenesis of c-type cytochromes (cytochrome c6 and cytochrome f) at the step of heme attachment. This Synechococcus sp. (strain JA-3-3Ab) (Cyanobacteria bacterium Yellowstone A-Prime) protein is Cytochrome c biogenesis protein CcsA.